Here is a 380-residue protein sequence, read N- to C-terminus: MAKRDYYEILGVSKNATKEEIKKAYRKLSKKYHPDINKEPDAAEKFKEIKEAYEVLSDDQKRAHYDQFGHADPNQGFGGFRSDDFDFGGFSGFSGFDDIFSTFFGGGRRRDPNAPRAGADLQYTMTLTFEEAVFGKETDIEIPREETCNTCHGTGAKPGTKKETCSYCHGTGQISTEQSTPFGRIVNRRTCPYCGGTGQYIKERCTTCGGTGRVKRRKKIHVKIPAGIDDGQQLRVAGQGEPGINGGPPGDLYIVFHVEPHEFFERDGDDIYCEIPLTFAQAALGDEIEVPTLHGKVRLKIPAGTQTGTKFRLKGKGVPNVRGYGYGDQHVIVRVVTPTKLTEKQKQLLREFDQLGGSSMHQGPHGRFFEKVKKAFKGES.

Positions 5 to 69 (DYYEILGVSK…QKRAHYDQFG (65 aa)) constitute a J domain. The segment at 135–217 (GKETDIEIPR…CGGTGRVKRR (83 aa)) adopts a CR-type zinc-finger fold. Zn(2+) contacts are provided by C148, C151, C165, C168, C191, C194, C205, and C208. 4 CXXCXGXG motif repeats span residues 148 to 155 (CNTCHGTG), 165 to 172 (CSYCHGTG), 191 to 198 (CPYCGGTG), and 205 to 212 (CTTCGGTG).

The protein belongs to the DnaJ family. Homodimer. Zn(2+) serves as cofactor.

The protein localises to the cytoplasm. In terms of biological role, participates actively in the response to hyperosmotic and heat shock by preventing the aggregation of stress-denatured proteins and by disaggregating proteins, also in an autonomous, DnaK-independent fashion. Unfolded proteins bind initially to DnaJ; upon interaction with the DnaJ-bound protein, DnaK hydrolyzes its bound ATP, resulting in the formation of a stable complex. GrpE releases ADP from DnaK; ATP binding to DnaK triggers the release of the substrate protein, thus completing the reaction cycle. Several rounds of ATP-dependent interactions between DnaJ, DnaK and GrpE are required for fully efficient folding. Also involved, together with DnaK and GrpE, in the DNA replication of plasmids through activation of initiation proteins. This chain is Chaperone protein DnaJ, found in Parageobacillus thermoglucosidasius (Geobacillus thermoglucosidasius).